The sequence spans 324 residues: Putative arsenical pump-driving ATPase (324 aa).

Residue 21–28 participates in ATP binding; it reads GKGGVGKT.

Belongs to the arsA ATPase family.

The catalysed reaction is arsenite(in) + ATP + H2O = arsenite(out) + ADP + phosphate + H(+). Functionally, anion-transporting ATPase. Catalyzes the extrusion of arsenite. This Methanothermobacter thermautotrophicus (strain ATCC 29096 / DSM 1053 / JCM 10044 / NBRC 100330 / Delta H) (Methanobacterium thermoautotrophicum) protein is Putative arsenical pump-driving ATPase.